We begin with the raw amino-acid sequence, 300 residues long: NAD kinase (300 aa).

The Proton acceptor role is filled by Asp-75. NAD(+)-binding positions include 75–76 (DG), 149–150 (ND), Arg-177, Asp-179, 190–195 (TAYALS), Ala-214, and Gln-248.

Belongs to the NAD kinase family. A divalent metal cation serves as cofactor.

The protein resides in the cytoplasm. It carries out the reaction NAD(+) + ATP = ADP + NADP(+) + H(+). In terms of biological role, involved in the regulation of the intracellular balance of NAD and NADP, and is a key enzyme in the biosynthesis of NADP. Catalyzes specifically the phosphorylation on 2'-hydroxyl of the adenosine moiety of NAD to yield NADP. This chain is NAD kinase, found in Burkholderia multivorans (strain ATCC 17616 / 249).